A 166-amino-acid polypeptide reads, in one-letter code: Vasopressin-neurophysin 2-copeptin (166 aa).

A signal peptide spans 1–19; that stretch reads MPDATLPACFLSLLAFTSA. Cysteines 20 and 25 form a disulfide. Residue Gly-28 is modified to Glycine amide. 7 disulfides stabilise this stretch: Cys-41–Cys-85, Cys-44–Cys-58, Cys-52–Cys-75, Cys-59–Cys-65, Cys-92–Cys-104, Cys-98–Cys-116, and Cys-105–Cys-110. Residue Asn-133 is glycosylated (N-linked (GlcNAc...) asparagine).

The protein belongs to the vasopressin/oxytocin family. In terms of assembly, interacts with vasopressin receptors V1bR/AVPR1B (Ki=85 pM), V1aR/AVPR1A (Ki=0.6 nM) and V2R/AVPR2 (Ki=4.9 nM). Interacts with oxytocin receptor (OXTR) (Ki=110 nM).

The protein resides in the secreted. Neurophysin 2 specifically binds vasopressin. Functionally, vasopressin has a direct antidiuretic action on the kidney, it also causes vasoconstriction of the peripheral vessels. Acts by binding to vasopressin receptors (V1bR/AVPR1B, V1aR/AVPR1A, and V2R/AVPR2). This chain is Vasopressin-neurophysin 2-copeptin (AVP), found in Bos taurus (Bovine).